A 173-amino-acid polypeptide reads, in one-letter code: HTH-type transcriptional regulator IscR (173 aa).

In terms of domain architecture, HTH rrf2-type spans Lys-2–Lys-131. The segment at residues Leu-28 to Lys-51 is a DNA-binding region (H-T-H motif). Residues Cys-92, Cys-98, and Cys-104 each contribute to the [2Fe-2S] cluster site.

It depends on [2Fe-2S] cluster as a cofactor.

Regulates the transcription of several operons and genes involved in the biogenesis of Fe-S clusters and Fe-S-containing proteins. The sequence is that of HTH-type transcriptional regulator IscR from Vibrio atlanticus (strain LGP32) (Vibrio splendidus (strain Mel32)).